Here is a 656-residue protein sequence, read N- to C-terminus: MRRAVGFPALCLLLNLHAAGCFSRNNDHFLAIRQKKSWKPVFIYDHSQDIKKSLDIAQEAYKHNYHSPSEVQISKHHQIINSAFPRPAYDPSLNLLAESDQDLEIENLPIPAANVIVVTLQMDITKLNITLLRIFRQGVAAALGLLPQQVHINRLIEKKNQVELFVSPGNRKPGETQALQAEEVLRSLNVDGLHQSLPQFGITDVAPEKNVLQGQHEADKIWSKEGFYAVVIFLSIFIIIVTCLMIIYRLKERLQLSLRQDKEKNQEIHLSPIARQQAQSEAKTTHSMVQPDQAPKVLNVVVDPQGQCTPEIRNSTSTSVCPSPFRMKPIGLQERRGSNVSLTLDMSSLGSVEPFVAVSTPREKVAMEYLQSASRVLTRSQLRDVVASSHLLQSEFMEIPMNFVDPKEIDIPRHGTKNRYKTILPNPLSRVCLRPKNITDSLSTYINANYIRGYSGKEKAFIATQGPMINTVNDFWQMVWQEDSPVIVMITKLKEKNEKCVLYWPEKRGIYGKVEVLVTGVTECDNYTIRNLVLKQGSHTQHVKHYWYTSWPDHKTPDSAQPLLQLMLDVEEDRLASEGRGPVVVHCSAGIGRTGCFIATSIGCQQLKEEGVVDALSIVCQLRVDRGGMVQTSEQYEFVHHALCLFESRLSPETVE.

Residues 1-23 form the signal peptide; sequence MRRAVGFPALCLLLNLHAAGCFS. O-linked (Xyl...) (chondroitin sulfate) serine glycosylation is present at S23. Residues 24–226 are Extracellular-facing; it reads RNNDHFLAIR…EADKIWSKEG (203 aa). A glycan (N-linked (GlcNAc...) asparagine) is linked at N128. Residues 227–247 traverse the membrane as a helical segment; it reads FYAVVIFLSIFIIIVTCLMII. The Cytoplasmic portion of the chain corresponds to 248 to 656; that stretch reads YRLKERLQLS…ESRLSPETVE (409 aa). The interval 269–289 is disordered; that stretch reads HLSPIARQQAQSEAKTTHSMV. Position 271 is a phosphoserine (S271). Positions 274-289 are enriched in polar residues; the sequence is ARQQAQSEAKTTHSMV. Phosphoserine; by PKA is present on S338. One can recognise a Tyrosine-protein phosphatase domain in the interval 392-646; that stretch reads LQSEFMEIPM…EFVHHALCLF (255 aa). Substrate contacts are provided by residues D553, 587 to 593, and Q631; that span reads CSAGIGR. C587 serves as the catalytic Phosphocysteine intermediate.

It belongs to the protein-tyrosine phosphatase family. Receptor class 7 subfamily. As to quaternary structure, interacts with MAPKs. Expressed in the heart, brain, spleen, lung, liver, skeletal muscle, kidney and testis. Isoform alpha is expressed throughout the granular layer of the cerebellar but not within the Purkinje cells, also in the villi of the ileum and jejunum and both the villi and crypts of the duodenum. Isoform beta is expressed only in the Purkinje cells. Isoform gamma is expressed throughout the brain, the villi and crypts of the duodenum, jejunum and ileum and expressed at low levels in the proximal colon.

The protein resides in the cell membrane. It localises to the cytoplasm. It catalyses the reaction O-phospho-L-tyrosyl-[protein] + H2O = L-tyrosyl-[protein] + phosphate. Functionally, sequesters mitogen-activated protein kinases (MAPKs) such as MAPK1, MAPK3 and MAPK14 in the cytoplasm in an inactive form. The MAPKs bind to a dephosphorylated kinase interacting motif, phosphorylation of which by the protein kinase A complex releases the MAPKs for activation and translocation into the nucleus. Isoform gamma may have a role in patterning and cellular proliferation of skeletal elements in the precartilaginous/cartilaginous skeleton. The polypeptide is Receptor-type tyrosine-protein phosphatase R (Ptprr) (Mus musculus (Mouse)).